The sequence spans 807 residues: DNA gyrase subunit B (807 aa).

The 115-residue stretch at 429 to 543 (SELFIVEGDS…KGYLYIAQPP (115 aa)) folds into the Toprim domain. The Mg(2+) site is built by E435, D508, and D510.

Belongs to the type II topoisomerase GyrB family. In terms of assembly, heterotetramer, composed of two GyrA and two GyrB chains. In the heterotetramer, GyrA contains the active site tyrosine that forms a transient covalent intermediate with DNA, while GyrB binds cofactors and catalyzes ATP hydrolysis. It depends on Mg(2+) as a cofactor. Mn(2+) is required as a cofactor. The cofactor is Ca(2+).

The protein localises to the cytoplasm. The enzyme catalyses ATP-dependent breakage, passage and rejoining of double-stranded DNA.. A type II topoisomerase that negatively supercoils closed circular double-stranded (ds) DNA in an ATP-dependent manner to modulate DNA topology and maintain chromosomes in an underwound state. Negative supercoiling favors strand separation, and DNA replication, transcription, recombination and repair, all of which involve strand separation. Also able to catalyze the interconversion of other topological isomers of dsDNA rings, including catenanes and knotted rings. Type II topoisomerases break and join 2 DNA strands simultaneously in an ATP-dependent manner. The protein is DNA gyrase subunit B of Rickettsia typhi (strain ATCC VR-144 / Wilmington).